The chain runs to 216 residues: Maintenance of carboxysome distribution protein A (216 aa).

Residues Gly16, Gly17, Gly19, Lys20, Thr21, Thr22, and Gln45 each coordinate ATP. Thr21 is a binding site for Mg(2+).

This sequence belongs to the ParA family. McdA subfamily. In terms of assembly, self-associates, associates with McdB.

It is found in the cytoplasm. It localises to the nucleoid. It carries out the reaction ATP + H2O = ADP + phosphate + H(+). In terms of biological role, mcdA and McdB together mediate carboxysome positioning on the nucleoid and prevent their aggregation in the cell. McdA is an ATPase that forms dynamic gradients on the nucleoid in response to adapter protein McdB, which associates with carboxysomes. The interplay between McdA gradients on the nucleoid and McdB-bound carboxysomes result in the equal spacing of Cbs along the cell length. Incorrect positioning (aggregation) of carboxysomes results in reduced CO(2) fixation by encapsulated form 1 ribulose-1,5-bisphosphate carboxylase (RuBisCO, cbbL/cbbS), which leads to slower growth. In Halothiobacillus neapolitanus (strain ATCC 23641 / c2) (Thiobacillus neapolitanus), this protein is Maintenance of carboxysome distribution protein A.